We begin with the raw amino-acid sequence, 261 residues long: Kynurenine formamidase (261 aa).

At Ser-9 the chain carries Phosphoserine. The HGGXW motif lies at 36 to 40; sequence HGGAW. Catalysis depends on Ser-110, which acts as the Nucleophile. Active-site residues include Asp-211 and His-243.

This sequence belongs to the kynurenine formamidase family. Homodimer.

It carries out the reaction N-formyl-L-kynurenine + H2O = L-kynurenine + formate + H(+). Its pathway is amino-acid degradation; L-tryptophan degradation via kynurenine pathway; L-kynurenine from L-tryptophan: step 2/2. Its function is as follows. Catalyzes the hydrolysis of N-formyl-L-kynurenine to L-kynurenine, the second step in the kynurenine pathway of tryptophan degradation. Kynurenine may be further oxidized to nicotinic acid, NAD(H) and NADP(H). Required for elimination of toxic metabolites. This is Kynurenine formamidase from Saccharomyces cerevisiae (strain ATCC 204508 / S288c) (Baker's yeast).